The primary structure comprises 222 residues: uncharacterized protein (222 aa).

4 helical membrane passes run 25 to 45, 80 to 100, 111 to 131, and 160 to 180; these read LLWL…PATA, LLGA…ALIY, FAIM…FPLL, and LALT…VPFF.

It localises to the cell membrane. This is an uncharacterized protein from Bacillus subtilis (strain 168).